A 155-amino-acid chain; its full sequence is Aspartate carbamoyltransferase regulatory chain (155 aa).

Positions 110, 115, 139, and 142 each coordinate Zn(2+).

It belongs to the PyrI family. Contains catalytic and regulatory chains. Requires Zn(2+) as cofactor.

Its function is as follows. Involved in allosteric regulation of aspartate carbamoyltransferase. This chain is Aspartate carbamoyltransferase regulatory chain, found in Yersinia pestis bv. Antiqua (strain Antiqua).